Consider the following 267-residue polypeptide: Small ribosomal subunit protein uS2 (267 aa).

Residues 1–72 (MSGNEKEGLD…QLDEDVMPDE (72 aa)) form a disordered region. The span at 10–72 (DASDSDFDPS…QLDEDVMPDE (63 aa)) shows a compositional bias: acidic residues.

This sequence belongs to the universal ribosomal protein uS2 family. The N-terminus is blocked.

The protein is Small ribosomal subunit protein uS2 (rps2) of Haloarcula marismortui (strain ATCC 43049 / DSM 3752 / JCM 8966 / VKM B-1809) (Halobacterium marismortui).